A 373-amino-acid chain; its full sequence is Mannitol-1-phosphate 5-dehydrogenase (373 aa).

Residue 3-14 (ALHFGAGNIGRG) participates in NAD(+) binding.

The protein belongs to the mannitol dehydrogenase family.

It catalyses the reaction D-mannitol 1-phosphate + NAD(+) = beta-D-fructose 6-phosphate + NADH + H(+). The chain is Mannitol-1-phosphate 5-dehydrogenase (mtlD) from Bacillus subtilis (strain 168).